A 157-amino-acid polypeptide reads, in one-letter code: MKVAIYPGSFDPITNGHLDIIERASKMCDHLIVSVIHNPNKNPLFSLEERKLLIEECIGKYANVTVDCFSGLLMEYAKGKEATAIIKGLRAISDFEYELQMALMNQRLCPSIETVFLMTSTEYSFLSSSLIKEVAKFGGSIHGMVPANVYKAITNRF.

Substrate is bound at residue serine 9. ATP is bound by residues serine 9–phenylalanine 10 and histidine 17. 3 residues coordinate substrate: lysine 41, leucine 73, and lysine 87. ATP is bound by residues glycine 88 to arginine 90, glutamate 98, and tyrosine 123 to serine 129.

The protein belongs to the bacterial CoaD family. In terms of assembly, homohexamer. Requires Mg(2+) as cofactor.

The protein resides in the cytoplasm. It catalyses the reaction (R)-4'-phosphopantetheine + ATP + H(+) = 3'-dephospho-CoA + diphosphate. It functions in the pathway cofactor biosynthesis; coenzyme A biosynthesis; CoA from (R)-pantothenate: step 4/5. Reversibly transfers an adenylyl group from ATP to 4'-phosphopantetheine, yielding dephospho-CoA (dPCoA) and pyrophosphate. The chain is Phosphopantetheine adenylyltransferase from Alkaliphilus oremlandii (strain OhILAs) (Clostridium oremlandii (strain OhILAs)).